A 568-amino-acid polypeptide reads, in one-letter code: Phosphoprotein (568 aa).

Disordered stretches follow at residues 1-23 and 38-320; these read MDQD…GGRE and SEPT…GIGE. Basic and acidic residues predominate over residues 7–20; sequence ILKEDSEVEREAPG. Residues 33-41 are N0 binding; it reads DAVLSSEPT. The segment covering 50–59 has biased composition (polar residues); it reads LHNTINTPQG. Serine 68 carries the phosphoserine; by host modification. Residues 83 to 101 show a composition bias toward basic and acidic residues; that stretch reads RSGEESRVSGRTSKPEAEA. Position 125 is a phosphoserine; by host (serine 125). The segment covering 150-168 has biased composition (basic and acidic residues); sequence GIEDENREMAAHPDKRGED. Residues 191–206 show a composition bias toward polar residues; sequence ASNNGRSMEPGSSHSA. Serine 192, serine 249, serine 257, and serine 260 each carry phosphoserine; by host. Residues 344–411 form a multimerization region; sequence FESSRDASYV…SFRDIYKRFS (68 aa). The stretch at 364–429 forms a coiled coil; sequence YAEMTFNVCG…LLMSNLSTLH (66 aa). A l protein binding region spans residues 412-445; that stretch reads EYQKEQNSLLMSNLSTLHIITDRGGKTDNTDSLT. Phosphoserine; by host occurs at positions 447 and 449. The segment at 479–568 is interaction with the nucleocapsid (N-RNA); it reads DLIREDEFRD…VEEDIESLTN (90 aa). Residues 496-516 form a disordered region; sequence QERDTEPRASNASRLLPSKEK. Positions 547–566 are formation of N-RNA complex involved in transcription and replication; that stretch reads KTDQEVKAVMELVEEDIESL.

It belongs to the respirovirus P protein family. As to quaternary structure, homotetramer. Interacts (via multimerization domain) with polymerase L; this interaction forms the polymerase complex. Interacts (via N-terminus) with N0; this interaction allows P to chaperon N0 before encapsidation and form the N-P complex. Interacts (via C-terminus) with N-RNA template; this interaction positions the polymerase on the template. Post-translationally, phosphorylated by PKC/PRKCZ, and other unknown kinases. Phosphorylation is necessary for viral transcription and replication. The N-terminus contains the majority of phosphorylated sites. Ser-249 is the major site of phosphorylation, but is not necessary for most functions.

Its subcellular location is the host cytoplasm. In terms of biological role, essential cofactor of the RNA polymerase L that plays a central role in the transcription and replication by forming the polymerase complex with RNA polymerase L and recruiting L to the genomic N-RNA template for RNA synthesis. Also plays a central role in the encapsidation of nascent RNA chains by forming the encapsidation complex with the nucleocapsid protein N (N-P complex). Acts as a chaperone for newly synthesized free N protein, so-called N0, allowing encapsidation of nascent RNA chains during replication. The nucleoprotein protein N prevents excessive phosphorylation of P, which leads to down-regulation of viral transcription/ replication. Participates, together with N, in the formation of viral factories (viroplasms), which are large inclusions in the host cytoplasm where replication takes place. Recruits host PI4KB and remodel the host endoplasmic reticulum membrane to form viral replication factories. This is Phosphoprotein (P/V/C) from Cavia cutleri (Guinea pig).